The following is a 316-amino-acid chain: Apolipoprotein E (316 aa).

The N-terminal stretch at 1–18 (MKVLWVAVVVALLAGCQA) is a signal peptide. A run of 8 repeats spans residues 79–100 (ALME…GQLG), 101–122 (PMAQ…ARLG), 123–144 (SDME…AMLG), 145–166 (QSTE…KRLL), 167–188 (RDAD…EGAE), 189–210 (RSLS…SRAA), 211–232 (TLST…QKLH), and 233–254 (GRLE…QQLE). Residues 79 to 254 (ALMEETMKEV…RLDKIRQQLE (176 aa)) are 8 X 22 AA approximate tandem repeats. Methionine sulfoxide is present on Met-142. At Ser-146 the chain carries Phosphoserine; by FAM20C. The LDL and other lipoprotein receptors binding stretch occupies residues 157-167 (HLRKLRKRLLR). Position 161-164 (161-164 (LRKR)) interacts with heparin. A lipid-binding and lipoprotein association region spans residues 209–289 (AATLSTLAGQ…SWFEPLVEDM (81 aa)). O-linked (GalNAc...) threonine glycosylation occurs at Thr-211. 228–235 (RQKLHGRL) is a heparin binding site. The interval 265–316 (NQMRLQAEAFQARLRSWFEPLVEDMQRQWAGLVEKVQLALRPSPTSPPSENH) is homooligomerization. The tract at residues 277-289 (RLRSWFEPLVEDM) is specificity for association with VLDL.

It belongs to the apolipoprotein A1/A4/E family. As to quaternary structure, homotetramer. May interact with ABCA1; functionally associated with ABCA1 in the biogenesis of HDLs. May interact with APP/A4 amyloid-beta peptide; the interaction is extremely stable in vitro but its physiological significance is unclear. May interact with MAPT. May interact with MAP2. In the cerebrospinal fluid, interacts with secreted SORL1. Interacts with PMEL; this allows the loading of PMEL luminal fragment on ILVs to induce fibril nucleation. In terms of processing, APOE exists as multiple glycosylated and sialylated glycoforms within cells and in plasma. The extent of glycosylation and sialylation are tissue and context specific. Glycated in plasma VLDL. Post-translationally, phosphorylated by FAM20C in the extracellular medium.

Its subcellular location is the secreted. It localises to the extracellular space. The protein localises to the extracellular matrix. It is found in the extracellular vesicle. The protein resides in the endosome. Its subcellular location is the multivesicular body. APOE is an apolipoprotein, a protein associating with lipid particles, that mainly functions in lipoprotein-mediated lipid transport between organs via the plasma and interstitial fluids. APOE is a core component of plasma lipoproteins and is involved in their production, conversion and clearance. Apolipoproteins are amphipathic molecules that interact both with lipids of the lipoprotein particle core and the aqueous environment of the plasma. As such, APOE associates with chylomicrons, chylomicron remnants, very low density lipoproteins (VLDL) and intermediate density lipoproteins (IDL) but shows a preferential binding to high-density lipoproteins (HDL). It also binds a wide range of cellular receptors including the LDL receptor/LDLR and the very low-density lipoprotein receptor/VLDLR that mediate the cellular uptake of the APOE-containing lipoprotein particles. Finally, APOE also has a heparin-binding activity and binds heparan-sulfate proteoglycans on the surface of cells, a property that supports the capture and the receptor-mediated uptake of APOE-containing lipoproteins by cells. The protein is Apolipoprotein E (APOE) of Bos mutus grunniens (Wild yak).